The sequence spans 80 residues: WAP four-disulfide core domain protein 15B (80 aa).

The N-terminal stretch at 1 to 20 is a signal peptide; it reads MKLLGLSLLAVTILLCCNMA. One can recognise a WAP domain in the interval 29–76; the sequence is VFSKPGYCPEYRVPCPFVLIPKCRRDKGCKDALKCCFFYCQMRCVDPW. 4 disulfide bridges follow: Cys-36–Cys-64, Cys-43–Cys-68, Cys-51–Cys-63, and Cys-57–Cys-72.

In terms of tissue distribution, constitutively expressed in kidney and epididymis.

Its subcellular location is the secreted. In terms of biological role, antibacterial protein which inhibits the growth of E.coli and S.aureus. The sequence is that of WAP four-disulfide core domain protein 15B (Wfdc15b) from Mus musculus (Mouse).